Consider the following 462-residue polypeptide: Cytochrome c biogenesis protein CcsB (462 aa).

The next 3 membrane-spanning stretches (helical) occupy residues Leu30 to Ile50, Thr89 to Arg109, and Ile175 to Ala195.

It belongs to the Ccs1/CcsB family. In terms of assembly, may interact with CcsA.

The protein localises to the cellular thylakoid membrane. Its function is as follows. Required during biogenesis of c-type cytochromes (cytochrome c6 and cytochrome f) at the step of heme attachment. This Picosynechococcus sp. (strain ATCC 27264 / PCC 7002 / PR-6) (Agmenellum quadruplicatum) protein is Cytochrome c biogenesis protein CcsB.